Consider the following 885-residue polypeptide: Leucine--tRNA ligase (885 aa).

Residues 48–58 (PYPSGKLHMGH) carry the 'HIGH' region motif. A 'KMSKS' region motif is present at residues 639–643 (TMSKS). Lys-642 provides a ligand contact to ATP.

The protein belongs to the class-I aminoacyl-tRNA synthetase family.

It is found in the cytoplasm. It catalyses the reaction tRNA(Leu) + L-leucine + ATP = L-leucyl-tRNA(Leu) + AMP + diphosphate. The polypeptide is Leucine--tRNA ligase (Bordetella petrii (strain ATCC BAA-461 / DSM 12804 / CCUG 43448)).